Reading from the N-terminus, the 257-residue chain is tRNA (cytidine/uridine/adenosine-2'-O-)-methyltransferase TrmJ (257 aa).

S-adenosyl-L-methionine is bound by residues 79 to 82 (TSAR), 115 to 117 (GRE), Ile135, and 142 to 144 (GSL).

It belongs to the class IV-like SAM-binding methyltransferase superfamily. RNA methyltransferase TrmH family. In terms of assembly, homodimer.

Its subcellular location is the cytoplasm. The catalysed reaction is cytidine(32) in tRNA + S-adenosyl-L-methionine = 2'-O-methylcytidine(32) in tRNA + S-adenosyl-L-homocysteine + H(+). It catalyses the reaction uridine(32) in tRNA + S-adenosyl-L-methionine = 2'-O-methyluridine(32) in tRNA + S-adenosyl-L-homocysteine + H(+). The enzyme catalyses adenosine(32) in tRNA + S-adenosyl-L-methionine = 2'-O-methyladenosine(32) in tRNA + S-adenosyl-L-homocysteine + H(+). Functionally, catalyzes the formation of 2'O-methylated cytidine (Cm32), 2'O-methylated uridine (Um32) or 2'O-methylated adenosine (Am32) at position 32 in tRNA. Confers resistance to oxidative stress. The polypeptide is tRNA (cytidine/uridine/adenosine-2'-O-)-methyltransferase TrmJ (Pseudomonas aeruginosa (strain UCBPP-PA14)).